Reading from the N-terminus, the 113-residue chain is UPF0060 membrane protein Mmcs_2513 (113 aa).

The next 4 helical transmembrane spans lie at 12-32 (ALFVLAALLEIGGAWLVWQGV), 37-57 (GWIWAGAGVIALGAYGFVAAF), 66-86 (ILAAYGGVFVAGSLLWGVVVD), and 92-112 (RWDLTGALVCLVGVGLIMYAP).

Belongs to the UPF0060 family.

The protein localises to the cell membrane. The protein is UPF0060 membrane protein Mmcs_2513 of Mycobacterium sp. (strain MCS).